A 105-amino-acid chain; its full sequence is Large ribosomal subunit protein uL24 (105 aa).

The protein belongs to the universal ribosomal protein uL24 family. As to quaternary structure, part of the 50S ribosomal subunit.

Its function is as follows. One of two assembly initiator proteins, it binds directly to the 5'-end of the 23S rRNA, where it nucleates assembly of the 50S subunit. One of the proteins that surrounds the polypeptide exit tunnel on the outside of the subunit. The sequence is that of Large ribosomal subunit protein uL24 from Tolumonas auensis (strain DSM 9187 / NBRC 110442 / TA 4).